A 142-amino-acid chain; its full sequence is 3-hydroxyacyl-[acyl-carrier-protein] dehydratase FabZ (142 aa).

Residue H41 is part of the active site.

Belongs to the thioester dehydratase family. FabZ subfamily.

It localises to the cytoplasm. It carries out the reaction a (3R)-hydroxyacyl-[ACP] = a (2E)-enoyl-[ACP] + H2O. Functionally, involved in unsaturated fatty acids biosynthesis. Catalyzes the dehydration of short chain beta-hydroxyacyl-ACPs and long chain saturated and unsaturated beta-hydroxyacyl-ACPs. The polypeptide is 3-hydroxyacyl-[acyl-carrier-protein] dehydratase FabZ (Symbiobacterium thermophilum (strain DSM 24528 / JCM 14929 / IAM 14863 / T)).